Reading from the N-terminus, the 135-residue chain is uncharacterized protein (135 aa).

In terms of domain architecture, HTH hxlR-type spans 25–123 (CPIQHVVDLL…LGSDWLEQES (99 aa)).

This is an uncharacterized protein from Synechocystis sp. (strain ATCC 27184 / PCC 6803 / Kazusa).